A 262-amino-acid chain; its full sequence is Acyl-[acyl-carrier-protein]--UDP-N-acetylglucosamine O-acyltransferase (262 aa).

This sequence belongs to the transferase hexapeptide repeat family. LpxA subfamily. As to quaternary structure, homotrimer.

Its subcellular location is the cytoplasm. It catalyses the reaction a (3R)-hydroxyacyl-[ACP] + UDP-N-acetyl-alpha-D-glucosamine = a UDP-3-O-[(3R)-3-hydroxyacyl]-N-acetyl-alpha-D-glucosamine + holo-[ACP]. It participates in glycolipid biosynthesis; lipid IV(A) biosynthesis; lipid IV(A) from (3R)-3-hydroxytetradecanoyl-[acyl-carrier-protein] and UDP-N-acetyl-alpha-D-glucosamine: step 1/6. Its function is as follows. Involved in the biosynthesis of lipid A, a phosphorylated glycolipid that anchors the lipopolysaccharide to the outer membrane of the cell. This chain is Acyl-[acyl-carrier-protein]--UDP-N-acetylglucosamine O-acyltransferase, found in Herminiimonas arsenicoxydans.